The sequence spans 220 residues: Octanoyltransferase (220 aa).

The BPL/LPL catalytic domain maps to 34-209 (ENSQDEIWVV…TLSQELGLAN (176 aa)). Substrate-binding positions include 73–80 (RGGQVTYH), 140–142 (SLG), and 153–155 (GLA). C171 functions as the Acyl-thioester intermediate in the catalytic mechanism.

It belongs to the LipB family.

It is found in the cytoplasm. It catalyses the reaction octanoyl-[ACP] + L-lysyl-[protein] = N(6)-octanoyl-L-lysyl-[protein] + holo-[ACP] + H(+). It functions in the pathway protein modification; protein lipoylation via endogenous pathway; protein N(6)-(lipoyl)lysine from octanoyl-[acyl-carrier-protein]: step 1/2. Catalyzes the transfer of endogenously produced octanoic acid from octanoyl-acyl-carrier-protein onto the lipoyl domains of lipoate-dependent enzymes. Lipoyl-ACP can also act as a substrate although octanoyl-ACP is likely to be the physiological substrate. The sequence is that of Octanoyltransferase from Shewanella piezotolerans (strain WP3 / JCM 13877).